A 339-amino-acid polypeptide reads, in one-letter code: MIRVGIIGATGYTGLELVRLLKNHPEAKITYLSSRTYAGKKLEEVFPSTLENSILSEFDPEKVSKNCDVLFTALPAGASYDLVRELKGVKIIDLGADFRFDDPGVYREWYGKELSGYENIKRVYGLPELHREEIKNAQVVGNPGCYPTSVILALAPALKRNLVDPETILVDAKSGVSGAGRKEKVDYLFSEVNESLRPYNVAKHRHVPEMEQELEKISGKKVNVVFTPHLVPMTRGILSTIYVKTDKSLEEIHEAYLEFYRNEPFVHVLPMGIYPSTKWCYGSNHVFIGMQMEERTNTLILMSAIDNLVKGASGQAVQNMNIMFGLDETKGLEFTPIYP.

Cysteine 145 is a catalytic residue.

The protein belongs to the NAGSA dehydrogenase family. Type 1 subfamily.

The protein localises to the cytoplasm. It catalyses the reaction N-acetyl-L-glutamate 5-semialdehyde + phosphate + NADP(+) = N-acetyl-L-glutamyl 5-phosphate + NADPH + H(+). Its pathway is amino-acid biosynthesis; L-arginine biosynthesis; N(2)-acetyl-L-ornithine from L-glutamate: step 3/4. Functionally, catalyzes the NADPH-dependent reduction of N-acetyl-5-glutamyl phosphate to yield N-acetyl-L-glutamate 5-semialdehyde. The sequence is that of N-acetyl-gamma-glutamyl-phosphate reductase from Thermotoga petrophila (strain ATCC BAA-488 / DSM 13995 / JCM 10881 / RKU-1).